Here is a 448-residue protein sequence, read N- to C-terminus: Alginate biosynthesis transcriptional regulatory protein AlgB (448 aa).

A Response regulatory domain is found at 10–124 (RILLVDDESA…QLRLATAKQL (115 aa)). 4-aspartylphosphate is present on Asp-59. Positions 147-376 (LDSHSPSMMA…LRNVIERASI (230 aa)) constitute a Sigma-54 factor interaction domain. Residues 175–182 (GESGTGKG) and 238–247 (ADGGTLFLDE) contribute to the ATP site. The H-T-H motif DNA-binding region spans 425–444 (LDQAAKTLGIDASTLYRKRK).

Its pathway is glycan biosynthesis; alginate biosynthesis [regulation]. Its function is as follows. Positive regulator of the alginate biosynthetic gene algD. The polypeptide is Alginate biosynthesis transcriptional regulatory protein AlgB (algB) (Pseudomonas syringae pv. tomato (strain ATCC BAA-871 / DC3000)).